Here is a 965-residue protein sequence, read N- to C-terminus: Translation initiation factor IF-2 (965 aa).

Residues 94–375 (RTFVRRDEAA…RGKHQESTTF (282 aa)) form a disordered region. The segment covering 104–115 (EQAAEATGNGQE) has biased composition (low complexity). Residues 121 to 177 (ELQRREEEARHEAELLEKQAQELKARQEQLAREEAERQAREQAAEAERRRAEEEAAK) show a composition bias toward basic and acidic residues. Residues 181–191 (AAVAEAAAAAR) are compositionally biased toward low complexity. A compositionally biased stretch (basic and acidic residues) spans 192–253 (EQAEQERASQ…KAEAEARAIR (62 aa)). Residues 267-276 (PEPPPKPAEA) are compositionally biased toward pro residues. Positions 303–320 (KKPAPAAAAQPAATTQPA) are enriched in low complexity. The span at 351–364 (TSGGVDRGWRGGPK) shows a compositional bias: gly residues. Residues 465–634 (PRPPVVTVMG…LLQAEVLELK (170 aa)) form the tr-type G domain. The tract at residues 474 to 481 (GHVDHGKT) is G1. 474 to 481 (GHVDHGKT) serves as a coordination point for GTP. Residues 499–503 (GITQH) form a G2 region. The G3 stretch occupies residues 520-523 (DTPG). GTP-binding positions include 520–524 (DTPGH) and 574–577 (NKID). Residues 574–577 (NKID) are G4. Residues 610 to 612 (SAK) form a G5 region.

This sequence belongs to the TRAFAC class translation factor GTPase superfamily. Classic translation factor GTPase family. IF-2 subfamily.

It is found in the cytoplasm. In terms of biological role, one of the essential components for the initiation of protein synthesis. Protects formylmethionyl-tRNA from spontaneous hydrolysis and promotes its binding to the 30S ribosomal subunits. Also involved in the hydrolysis of GTP during the formation of the 70S ribosomal complex. This chain is Translation initiation factor IF-2, found in Paraburkholderia phymatum (strain DSM 17167 / CIP 108236 / LMG 21445 / STM815) (Burkholderia phymatum).